The primary structure comprises 265 residues: Pyridoxine 5'-phosphate synthase (265 aa).

N6 contributes to the 3-amino-2-oxopropyl phosphate binding site. 8–9 (DH) contributes to the 1-deoxy-D-xylulose 5-phosphate binding site. R17 contacts 3-amino-2-oxopropyl phosphate. H42 acts as the Proton acceptor in catalysis. 1-deoxy-D-xylulose 5-phosphate is bound by residues R44 and H49. E69 (proton acceptor) is an active-site residue. Position 99 (T99) interacts with 1-deoxy-D-xylulose 5-phosphate. The active-site Proton donor is H213. Residues G214 and 235-236 (GQ) contribute to the 3-amino-2-oxopropyl phosphate site.

It belongs to the PNP synthase family. Homooctamer; tetramer of dimers.

It localises to the cytoplasm. It catalyses the reaction 3-amino-2-oxopropyl phosphate + 1-deoxy-D-xylulose 5-phosphate = pyridoxine 5'-phosphate + phosphate + 2 H2O + H(+). The protein operates within cofactor biosynthesis; pyridoxine 5'-phosphate biosynthesis; pyridoxine 5'-phosphate from D-erythrose 4-phosphate: step 5/5. Its function is as follows. Catalyzes the complicated ring closure reaction between the two acyclic compounds 1-deoxy-D-xylulose-5-phosphate (DXP) and 3-amino-2-oxopropyl phosphate (1-amino-acetone-3-phosphate or AAP) to form pyridoxine 5'-phosphate (PNP) and inorganic phosphate. This is Pyridoxine 5'-phosphate synthase from Nitratiruptor sp. (strain SB155-2).